The chain runs to 72 residues: Translation initiation factor IF-1 (72 aa).

The S1-like domain occupies 1–72; sequence MAKEDTLEFP…TKGRINYRFK (72 aa).

Belongs to the IF-1 family. Component of the 30S ribosomal translation pre-initiation complex which assembles on the 30S ribosome in the order IF-2 and IF-3, IF-1 and N-formylmethionyl-tRNA(fMet); mRNA recruitment can occur at any time during PIC assembly.

The protein localises to the cytoplasm. One of the essential components for the initiation of protein synthesis. Stabilizes the binding of IF-2 and IF-3 on the 30S subunit to which N-formylmethionyl-tRNA(fMet) subsequently binds. Helps modulate mRNA selection, yielding the 30S pre-initiation complex (PIC). Upon addition of the 50S ribosomal subunit IF-1, IF-2 and IF-3 are released leaving the mature 70S translation initiation complex. In Roseobacter denitrificans (strain ATCC 33942 / OCh 114) (Erythrobacter sp. (strain OCh 114)), this protein is Translation initiation factor IF-1.